A 204-amino-acid polypeptide reads, in one-letter code: MAPSYKLTYCPVKALGEPIRFLLSYGEKDFEDYRFQEGDWPNLKPSMPFGKTPVLEIDGKQTHQSVAISRYLGKQFGLSGKDDWENLEIDMIVDTISDFRAAIANYHYDADENSKQKKWDPLKKETIPYYTKKFDEVVKANGGYLAAGKLTWADFYFVAILDYLNHMAKEDLVANQPNLKALREKVLGLPAIKAWVAKRPPTDL.

The region spanning 3 to 80 (PSYKLTYCPV…YLGKQFGLSG (78 aa)) is the GST N-terminal domain. Glutathione-binding positions include tyrosine 9, tryptophan 40, lysine 44, 50 to 52 (GKT), and 64 to 65 (QS). Positions 82 to 204 (DDWENLEIDM…WVAKRPPTDL (123 aa)) constitute a GST C-terminal domain.

This sequence belongs to the GST superfamily. Sigma family.

It catalyses the reaction RX + glutathione = an S-substituted glutathione + a halide anion + H(+). The protein is Glutathione S-transferase of Blattella germanica (German cockroach).